We begin with the raw amino-acid sequence, 407 residues long: Immunoglobulin superfamily member 5 (407 aa).

Topologically, residues 1 to 266 (MGQKERSTAD…LGFSLPTWGK (266 aa)) are extracellular. 2 consecutive Ig-like V-type domains span residues 39 to 139 (NEVI…LTVQ) and 142 to 231 (GELF…ATVN). 4 N-linked (GlcNAc...) asparagine glycosylation sites follow: asparagine 59, asparagine 103, asparagine 210, and asparagine 231. Intrachain disulfides connect cysteine 60–cysteine 123 and cysteine 163–cysteine 215. The chain crosses the membrane as a helical span at residues 267 to 285 (VGLGLAGTMLLTPTCTLTI). Topologically, residues 286-407 (RCCCCRRRCC…PEKVSNTTVV (122 aa)) are cytoplasmic. Residues 320–331 (KSEKEKTNKETE) show a composition bias toward basic and acidic residues. A disordered region spans residues 320–407 (KSEKEKTNKE…PEKVSNTTVV (88 aa)). Positions 389-407 (PQASFNLASPEKVSNTTVV) are enriched in polar residues.

This sequence belongs to the immunoglobulin superfamily. Interacts with MAGI1 at tight junctions, forms a tripartite complex with NPHS1. Interacts with LNX1 isoform 2 via its PDZ 2 domain, it may also interact with other isoforms containing this domain.

Its subcellular location is the apical cell membrane. The protein resides in the cell junction. The protein localises to the tight junction. In terms of biological role, provides, together with MAGI1, an adhesion machinery at tight junctions, which may regulate the permeability of kidney glomerulus and small intestinal epithelial cells. Mediates calcium-independent homophilic cell adhesion. In testis, it may function as a cell adhesion molecule rather than a tight-junction protein. It may participate in the adhesion between spermatogonia-spermatogonia, spermatogonia-Sertoli cells, and Sertoli cells-Sertoli cells. The polypeptide is Immunoglobulin superfamily member 5 (IGSF5) (Homo sapiens (Human)).